The primary structure comprises 294 residues: Secreted frizzled-related protein 2 (294 aa).

Residues 1 to 24 form the signal peptide; the sequence is MPRGPGSLLLLVLASHCCLGSARG. One can recognise an FZ domain in the interval 34 to 154; that stretch reads YKRSNCKPIP…PQDNDLCIPL (121 aa). 8 disulfides stabilise this stretch: Cys39/Cys102, Cys49/Cys95, Cys86/Cys124, Cys113/Cys151, Cys117/Cys141, Cys171/Cys244, Cys174/Cys246, and Cys189/Cys294. Residues 171–294 enclose the NTR domain; that stretch reads CEACKNKNED…ISRSIRKLQC (124 aa).

The protein belongs to the secreted frizzled-related protein (sFRP) family.

Its subcellular location is the secreted. Its function is as follows. Soluble frizzled-related proteins (sFRPS) function as modulators of Wnt signaling through direct interaction with Wnts. They have a role in regulating cell growth and differentiation in specific cell types. SFRP2 may be important for eye retinal development and for myogenesis. The polypeptide is Secreted frizzled-related protein 2 (SFRP2) (Canis lupus familiaris (Dog)).